The primary structure comprises 496 residues: Cytochrome P450 71B14 (496 aa).

Residues 1–21 (MIWWFIVGASFFFAFILIAKD) form a helical membrane-spanning segment. Cys436 is a binding site for heme.

It belongs to the cytochrome P450 family. Heme is required as a cofactor.

The protein resides in the membrane. This Arabidopsis thaliana (Mouse-ear cress) protein is Cytochrome P450 71B14 (CYP71B14).